Reading from the N-terminus, the 308-residue chain is Very-long-chain enoyl-CoA reductase (308 aa).

Over methionine 1–serine 86 the chain is Cytoplasmic. Lysine 22 is modified (N6-acetyllysine). Serine 58 carries the post-translational modification Phosphoserine. Lysine 60 carries the N6-acetyllysine modification. Residues tryptophan 87 to tyrosine 106 traverse the membrane as a helical segment. The Lumenal segment spans residues phenylalanine 107 to histidine 124. Residues threonine 125–phenylalanine 147 form a helical membrane-spanning segment. The Cytoplasmic portion of the chain corresponds to valine 148–leucine 158. A helical transmembrane segment spans residues arginine 159–asparagine 180. Topologically, residues histidine 181–tyrosine 189 are lumenal. A helical transmembrane segment spans residues glycine 190–arginine 216. The Cytoplasmic segment spans residues aspartate 217–cysteine 245. The helical transmembrane segment at proline 246 to threonine 262 threads the bilayer. Residues glutamine 263–cysteine 264 are Lumenal-facing. The chain crosses the membrane as a helical span at residues leucine 265 to glutamate 292. At phenylalanine 293–leucine 308 the chain is on the cytoplasmic side.

Belongs to the steroid 5-alpha reductase family. As to quaternary structure, interacts with ELOVL1 and LASS2. Interacts with HACD1 and HACD2 (via the third lumenal loop), but not with HACD3 and HACD4. Interacts with ELOVL1, ELOVL2, ELOVL3, ELOVL5 and ELOVL7 in the presence of acyl-CoA; interaction with HACD1/2 and that with ELOVLs are mutually exclusive. Post-translationally, glycosylated. Expressed in most tissues tested. Highly expressed in skeletal muscle.

The protein localises to the endoplasmic reticulum membrane. It carries out the reaction a very-long-chain 2,3-saturated fatty acyl-CoA + NADP(+) = a very-long-chain (2E)-enoyl-CoA + NADPH + H(+). The catalysed reaction is octadecanoyl-CoA + NADP(+) = (2E)-octadecenoyl-CoA + NADPH + H(+). It catalyses the reaction (2E,7Z,10Z,13Z,16Z)-docosapentaenoyl-CoA + NADPH + H(+) = (7Z,10Z,13Z,16Z)-docosatetraenoyl-CoA + NADP(+). The enzyme catalyses (2E,7Z,10Z,13Z,16Z,19Z)-docosahexaenoyl-CoA + NADPH + H(+) = (7Z,10Z,13Z,16Z,19Z)-docosapentaenoyl-CoA + NADP(+). It carries out the reaction (2E,8Z,11Z,14Z)-eicosatetraenoyl-CoA + NADPH + H(+) = (8Z,11Z,14Z)-eicosatrienoyl-CoA + NADP(+). The catalysed reaction is (2E)-hexadecenoyl-CoA + NADPH + H(+) = hexadecanoyl-CoA + NADP(+). It functions in the pathway lipid metabolism; fatty acid biosynthesis. The protein operates within lipid metabolism; sphingolipid metabolism. Its function is as follows. Involved in both the production of very long-chain fatty acids for sphingolipid synthesis and the degradation of the sphingosine moiety in sphingolipids through the sphingosine 1-phosphate metabolic pathway. Catalyzes the last of the four reactions of the long-chain fatty acids elongation cycle. This endoplasmic reticulum-bound enzymatic process, allows the addition of 2 carbons to the chain of long- and very long-chain fatty acids/VLCFAs per cycle. This enzyme reduces the trans-2,3-enoyl-CoA fatty acid intermediate to an acyl-CoA that can be further elongated by entering a new cycle of elongation. Thereby, it participates in the production of VLCFAs of different chain lengths that are involved in multiple biological processes as precursors of membrane lipids and lipid mediators. Catalyzes the saturation step of the sphingosine 1-phosphate metabolic pathway, the conversion of trans-2-hexadecenoyl-CoA to palmitoyl-CoA. This is Very-long-chain enoyl-CoA reductase (TECR) from Homo sapiens (Human).